We begin with the raw amino-acid sequence, 418 residues long: Glutamyl-tRNA reductase (418 aa).

Substrate contacts are provided by residues 49–52 (TCNR), S108, 113–115 (EPQ), and Q119. The Nucleophile role is filled by C50. 188–193 (GAGETI) provides a ligand contact to NADP(+).

It belongs to the glutamyl-tRNA reductase family. Homodimer.

It carries out the reaction (S)-4-amino-5-oxopentanoate + tRNA(Glu) + NADP(+) = L-glutamyl-tRNA(Glu) + NADPH + H(+). It functions in the pathway porphyrin-containing compound metabolism; protoporphyrin-IX biosynthesis; 5-aminolevulinate from L-glutamyl-tRNA(Glu): step 1/2. Its function is as follows. Catalyzes the NADPH-dependent reduction of glutamyl-tRNA(Glu) to glutamate 1-semialdehyde (GSA). In Aliivibrio salmonicida (strain LFI1238) (Vibrio salmonicida (strain LFI1238)), this protein is Glutamyl-tRNA reductase.